Here is a 305-residue protein sequence, read N- to C-terminus: 4-hydroxy-tetrahydrodipicolinate synthase 1 (305 aa).

Thr53 is a pyruvate binding site. Tyr141 acts as the Proton donor/acceptor in catalysis. The active-site Schiff-base intermediate with substrate is Lys169. Pyruvate is bound at residue Val209.

Belongs to the DapA family. Homotetramer; dimer of dimers.

The protein localises to the cytoplasm. The catalysed reaction is L-aspartate 4-semialdehyde + pyruvate = (2S,4S)-4-hydroxy-2,3,4,5-tetrahydrodipicolinate + H2O + H(+). The protein operates within amino-acid biosynthesis; L-lysine biosynthesis via DAP pathway; (S)-tetrahydrodipicolinate from L-aspartate: step 3/4. Its function is as follows. Catalyzes the condensation of (S)-aspartate-beta-semialdehyde [(S)-ASA] and pyruvate to 4-hydroxy-tetrahydrodipicolinate (HTPA). The chain is 4-hydroxy-tetrahydrodipicolinate synthase 1 from Streptomyces coelicolor (strain ATCC BAA-471 / A3(2) / M145).